A 329-amino-acid polypeptide reads, in one-letter code: GTP 3',8-cyclase (329 aa).

The Radical SAM core domain maps to 8–234 (VFARKFYYLR…QLRQRSDGPA (227 aa)). Arg17 lines the GTP pocket. Residues Cys24 and Cys28 each coordinate [4Fe-4S] cluster. An S-adenosyl-L-methionine-binding site is contributed by Tyr30. Cys31 lines the [4Fe-4S] cluster pocket. Position 68 (Arg68) interacts with GTP. Gly72 is a binding site for S-adenosyl-L-methionine. GTP is bound at residue Thr99. Ser123 is an S-adenosyl-L-methionine binding site. GTP is bound at residue Lys160. Met194 is a binding site for S-adenosyl-L-methionine. [4Fe-4S] cluster is bound by residues Cys257 and Cys260. 262–264 (RLR) contributes to the GTP binding site. A [4Fe-4S] cluster-binding site is contributed by Cys274.

It belongs to the radical SAM superfamily. MoaA family. Monomer and homodimer. The cofactor is [4Fe-4S] cluster.

It carries out the reaction GTP + AH2 + S-adenosyl-L-methionine = (8S)-3',8-cyclo-7,8-dihydroguanosine 5'-triphosphate + 5'-deoxyadenosine + L-methionine + A + H(+). It participates in cofactor biosynthesis; molybdopterin biosynthesis. Functionally, catalyzes the cyclization of GTP to (8S)-3',8-cyclo-7,8-dihydroguanosine 5'-triphosphate. The chain is GTP 3',8-cyclase from Shigella flexneri.